We begin with the raw amino-acid sequence, 384 residues long: MTWTSGQLQREKQARPGSGAVLAFPDDKDLRVYGPAESQSAVFGDVCPLLTSLLDGYNVCVMAYGQTGSGKSYTMLGRHSDDGPVLPLDPQSDLGIIPRVAEELFRLILENTSRSPKVEVSIVEVYNNDIFDLLAKDSIAAVSGVKREVVTAKDGRTEVALLASEAVGSASKLMELVHGGLQLRAKHPTLVHADSSRSHLIITVTLTTASCSDSTADQACSATLPREQTEAGRAGRSRRASQGALAPQLVPGNPAGHAEQVQARLQLVDSAGSECVGVSGVTGLALREMACISRSLAALAGVLGALLEHRGHAPYRNSRLTHLLQDCLGGDAKLLVILCISPSQRHLAQTLQGLGFGIRARQVQRGPARKKPPSSQTEGKRRPD.

Positions Met1 to Ala20 are disordered. Residues Gln7–Val363 form the Kinesin motor domain. Position 65–72 (Gly65–Ser72) interacts with ATP. 2 disordered regions span residues Asp217 to Gly256 and Gln362 to Asp384.

Belongs to the TRAFAC class myosin-kinesin ATPase superfamily. Kinesin family. As to quaternary structure, homotetramer.

The protein resides in the cytoplasm. It is found in the cytoskeleton. It localises to the microtubule organizing center. Its subcellular location is the centrosome. Minus-end microtubule-dependent motor protein. Acts as a negative regulator of centrosome separation required to prevent premature centrosome separation during interphase. Required to maintain a centered nucleus to ensure that the spindle is stably oriented at the onset of mitosis. May also act as a negative regulator of amino acid starvation-induced autophagy. This chain is Kinesin-like protein KIF25, found in Homo sapiens (Human).